The following is a 183-amino-acid chain: Small ribosomal subunit protein bS16 (183 aa).

Basic and acidic residues predominate over residues 149 to 161; the sequence is EKKAAEAAAKAEA. The segment at 149-183 is disordered; it reads EKKAAEAAAKAEAEAANAPAEEAPAAEATEAPAEA. Low complexity predominate over residues 162–183; that stretch reads EAANAPAEEAPAAEATEAPAEA.

It belongs to the bacterial ribosomal protein bS16 family.

The protein is Small ribosomal subunit protein bS16 of Phocaeicola vulgatus (strain ATCC 8482 / DSM 1447 / JCM 5826 / CCUG 4940 / NBRC 14291 / NCTC 11154) (Bacteroides vulgatus).